The chain runs to 404 residues: Serine/threonine-protein phosphatase 2A regulatory subunit rsa-1 (404 aa).

In terms of assembly, part of a complex consisting of a common heterodimeric core enzyme, composed of catalytic subunit let-92 and constant regulatory subunit paa-1, that associates with a variety of regulatory subunits which confer distinct properties to the holoenzyme. Interacts with rsa-2, spd-5 and tpxl-1.

Its subcellular location is the cytoplasm. The protein localises to the cytoskeleton. The protein resides in the microtubule organizing center. It localises to the centrosome. Its function is as follows. Regulatory subunit of phosphatase let-92 which recruits let-92/paa-1 complex to the centrosomes, thereby regulating microtubule outgrowth from centrosomes and mitotic spindle assembly ensuring the stability of kinetochore microtubules. This Caenorhabditis elegans protein is Serine/threonine-protein phosphatase 2A regulatory subunit rsa-1.